The primary structure comprises 213 residues: Pyridoxine/pyridoxamine 5'-phosphate oxidase (213 aa).

Residues 60–65, 75–76, lysine 82, and glutamine 104 contribute to the FMN site; these read RMVLMK and YS. Lysine 65 provides a ligand contact to substrate. Tyrosine 122, arginine 126, and serine 130 together coordinate substrate. FMN is bound by residues 139-140 and tryptophan 184; that span reads QS. 190–192 lines the substrate pocket; the sequence is RLH. Arginine 194 serves as a coordination point for FMN.

The protein belongs to the pyridoxamine 5'-phosphate oxidase family. Homodimer. It depends on FMN as a cofactor.

The catalysed reaction is pyridoxamine 5'-phosphate + O2 + H2O = pyridoxal 5'-phosphate + H2O2 + NH4(+). It carries out the reaction pyridoxine 5'-phosphate + O2 = pyridoxal 5'-phosphate + H2O2. Its pathway is cofactor metabolism; pyridoxal 5'-phosphate salvage; pyridoxal 5'-phosphate from pyridoxamine 5'-phosphate: step 1/1. It participates in cofactor metabolism; pyridoxal 5'-phosphate salvage; pyridoxal 5'-phosphate from pyridoxine 5'-phosphate: step 1/1. Catalyzes the oxidation of either pyridoxine 5'-phosphate (PNP) or pyridoxamine 5'-phosphate (PMP) into pyridoxal 5'-phosphate (PLP). The chain is Pyridoxine/pyridoxamine 5'-phosphate oxidase from Rhodopseudomonas palustris (strain BisB18).